A 304-amino-acid chain; its full sequence is tRNA pseudouridine synthase B (304 aa).

Asp-48 acts as the Nucleophile in catalysis.

This sequence belongs to the pseudouridine synthase TruB family. Type 1 subfamily.

It catalyses the reaction uridine(55) in tRNA = pseudouridine(55) in tRNA. Responsible for synthesis of pseudouridine from uracil-55 in the psi GC loop of transfer RNAs. In Pseudomonas paraeruginosa (strain DSM 24068 / PA7) (Pseudomonas aeruginosa (strain PA7)), this protein is tRNA pseudouridine synthase B.